A 2042-amino-acid chain; its full sequence is Protein mini spindles (2042 aa).

TOG regions lie at residues 1–229 and 267–505; these read MAED…VEPS and MDLL…KVAG. A binds tubulin region spans residues 1–505; sequence MAEDTEYKKL…KAEIKIKVAG (505 aa). Promotes microtubule polymerization stretches follow at residues 1–516 and 581–1080; these read MAED…ASAP and TPEE…EKAR. 7 HEAT repeats span residues 120 to 157, 160 to 197, 270 to 311, 315 to 353, 357 to 394, 396 to 433, and 440 to 478; these read EKQE…EFGH, IGVK…WIGA, LDPV…DHPK, GEYG…GLAK, NYAS…STSL, AQQE…TALN, and LTTS…VTPL. An association with microtubule lattice region spans residues 498 to 821; the sequence is EIKIKVAGPK…PKPVRGVQRS (324 aa). The disordered stretch occupies residues 506 to 572; that stretch reads PKKETRPASA…PTAALKAGGK (67 aa). The segment covering 513–531 has biased composition (low complexity); sequence ASAPTAKAAAPAKTVAGSV. The segment at 581–814 is TOG 3; sequence TPEELQEKSE…KNVGEKPPKP (234 aa). HEAT repeat units lie at residues 587-624, 625-662, 672-710, and 745-782; these read EKSE…SGFD, AKQA…IIRS, TTVD…LEYV, and LQPK…YMGK. Positions 804–849 are disordered; it reads DKNVGEKPPKPVRGVQRSSGGTAGNSPDNEDDDGGAAGEEEPINMA. Positions 819–830 are enriched in polar residues; sequence QRSSGGTAGNSP. The segment covering 831–845 has biased composition (acidic residues); sequence DNEDDDGGAAGEEEP. TOG stretches follow at residues 849 to 1087 and 1179 to 1415; these read ADLL…PVKP and TELL…KPTP. 4 HEAT repeats span residues 856-893, 896-933, 937-974, and 1017-1054; these read DIAP…EARL, PSIG…AMGA, NHVR…KGGY, and EDIH…HLGF. The interval 1083–1140 is disordered; that stretch reads LPVKPLPKGKHQAPIPEEPKLKTVRGGGAGGAPGIQKSATARVAGGQDKQVPARKKDE. The segment at 1099 to 1428 is association with microtubule lattice; the sequence is EEPKLKTVRG…VDVPAPQRHD (330 aa). HEAT repeat units follow at residues 1205–1242, 1272–1309, 1311–1344, and 1346–1383; these read RYHL…RFYD, NEGS…VFPF, KVFG…SYGM, and ICPQ…LSGE. Disordered regions lie at residues 1407–1455 and 1940–1959; these read AKKT…TFDQ and NAGS…NGPD. Residues 1940-1957 are compositionally biased toward polar residues; the sequence is NAGSTQDNRTDVNYQNNG.

It belongs to the TOG/XMAP215 family. In terms of assembly, interacts with tacc, dgt6. Interacts with mv. Interacts with Patronin.

Its subcellular location is the cytoplasm. It is found in the cytoskeleton. It localises to the microtubule organizing center. The protein localises to the centrosome. The protein resides in the spindle. Its subcellular location is the perinuclear region. Its function is as follows. Binds to the plus end of microtubules and regulates microtubule dynamics and microtubule organization. Function in neurons is essential for adult survival, and is important for climbing behavior and activity. Promotes cytoplasmic microtubule nucleation and elongation. May act as a microtubule antipause factor that rapidly catalyzes the transition from pause to either growth or shrinkage. Involved in mitotic spindle elongation. Involved in the establishment of cell polarity and mitotic spindle orientation in neuroblasts. Required for maintaining the bipolarity of acentrosomal meiotic spindles; the function is dependent on tacc and involves ncd. Involved in oocyte microtubule cytoskeleton organization and bicoid mRNA localization. Seems to be involved in elongation of kinetochore-derived microtubule fibers. In fat body cells, essential component of perinuclear non-centrosomal microtubule-organizing centers (ncMTOCs) which function to accommodate the organization of microtubule (MT) networks to control nuclear positioning and dynein motor-based retrograde endosomal trafficking. Within the ncMTOCs, Msp300 and shot anchors the ncMTOC at the nuclear surface and recruits the MT minus-end regulators Patronin and Nin for assembly, anchoring and/or stabilization of circumferential and radial MTs at the ncMTOCs. Patronin, and perhaps Nin, then recruits msps to the ncMTOC where it is required for the gamma-tubulin-independent elongation and assembly of radial MTs. This is Protein mini spindles (msps) from Drosophila melanogaster (Fruit fly).